Here is a 223-residue protein sequence, read N- to C-terminus: Putative protein phosphatase 2C 63 (223 aa).

A disordered region spans residues 1 to 22; that stretch reads MASSQQAVRETGRGRASSSSAG. The PPM-type phosphatase domain occupies 1 to 212; that stretch reads MASSQQAVRE…RNFHVHSSHV (212 aa).

Belongs to the PP2C family.

It catalyses the reaction O-phospho-L-seryl-[protein] + H2O = L-seryl-[protein] + phosphate. The enzyme catalyses O-phospho-L-threonyl-[protein] + H2O = L-threonyl-[protein] + phosphate. The sequence is that of Putative protein phosphatase 2C 63 from Oryza sativa subsp. japonica (Rice).